Consider the following 161-residue polypeptide: Nucleoside diphosphate kinase (161 aa).

The ATP site is built by lysine 13, phenylalanine 61, arginine 89, threonine 95, arginine 106, and asparagine 116. Histidine 119 acts as the Pros-phosphohistidine intermediate in catalysis.

The protein belongs to the NDK family. It depends on Mg(2+) as a cofactor.

Its subcellular location is the cytoplasm. The catalysed reaction is a 2'-deoxyribonucleoside 5'-diphosphate + ATP = a 2'-deoxyribonucleoside 5'-triphosphate + ADP. It carries out the reaction a ribonucleoside 5'-diphosphate + ATP = a ribonucleoside 5'-triphosphate + ADP. Major role in the synthesis of nucleoside triphosphates other than ATP. The ATP gamma phosphate is transferred to the NDP beta phosphate via a ping-pong mechanism, using a phosphorylated active-site intermediate. The protein is Nucleoside diphosphate kinase of Halobacterium salinarum (strain ATCC 29341 / DSM 671 / R1).